Here is a 461-residue protein sequence, read N- to C-terminus: Secreted 45 kDa protein (461 aa).

The signal sequence occupies residues 1–27 (MKKKIISAILMSTVILSAAAPLSGVYA). Residues 264 to 329 (SSASASSSQA…GNTNSGTSTG (66 aa)) show a composition bias toward low complexity. Residues 264-343 (SSASASSSQA…TTTGGSGINS (80 aa)) are disordered. A compositionally biased stretch (gly residues) spans 330–340 (NTGGTTTGGSG). One can recognise a Peptidase C51 domain in the interval 330-459 (NTGGTTTGGS…VSASGVTFLM (130 aa)).

The sequence is that of Secreted 45 kDa protein (usp45) from Lactococcus lactis subsp. cremoris (strain MG1363).